The following is a 403-amino-acid chain: L-cysteine:1D-myo-inositol 2-amino-2-deoxy-alpha-D-glucopyranoside ligase (403 aa).

C43 provides a ligand contact to Zn(2+). L-cysteinyl-5'-AMP is bound by residues 43–46 (CGIT), T58, 81–83 (NVT), and W223. The 'HIGH' region signature appears at 45–55 (ITPYDATHLGH). C227 is a binding site for Zn(2+). 245–247 (GAD) provides a ligand contact to L-cysteinyl-5'-AMP. H252 contacts Zn(2+). Position 278 (V278) interacts with L-cysteinyl-5'-AMP. Residues 284-288 (KMSKS) carry the 'KMSKS' region motif.

The protein belongs to the class-I aminoacyl-tRNA synthetase family. MshC subfamily. As to quaternary structure, monomer. The cofactor is Zn(2+).

The catalysed reaction is 1D-myo-inositol 2-amino-2-deoxy-alpha-D-glucopyranoside + L-cysteine + ATP = 1D-myo-inositol 2-(L-cysteinylamino)-2-deoxy-alpha-D-glucopyranoside + AMP + diphosphate + H(+). Functionally, catalyzes the ATP-dependent condensation of GlcN-Ins and L-cysteine to form L-Cys-GlcN-Ins. The protein is L-cysteine:1D-myo-inositol 2-amino-2-deoxy-alpha-D-glucopyranoside ligase of Acidothermus cellulolyticus (strain ATCC 43068 / DSM 8971 / 11B).